We begin with the raw amino-acid sequence, 374 residues long: Queuine tRNA-ribosyltransferase (374 aa).

Asp-89 (proton acceptor) is an active-site residue. Residues Asp-89–Phe-93, Asp-143, Gln-187, and Gly-214 each bind substrate. The segment at Gly-245 to Asp-251 is RNA binding. Asp-264 (nucleophile) is an active-site residue. The segment at Thr-269–Arg-273 is RNA binding; important for wobble base 34 recognition. Zn(2+)-binding residues include Cys-302, Cys-304, Cys-307, and His-333.

It belongs to the queuine tRNA-ribosyltransferase family. Homodimer. Within each dimer, one monomer is responsible for RNA recognition and catalysis, while the other monomer binds to the replacement base PreQ1. Zn(2+) serves as cofactor.

It catalyses the reaction 7-aminomethyl-7-carbaguanine + guanosine(34) in tRNA = 7-aminomethyl-7-carbaguanosine(34) in tRNA + guanine. It participates in tRNA modification; tRNA-queuosine biosynthesis. Catalyzes the base-exchange of a guanine (G) residue with the queuine precursor 7-aminomethyl-7-deazaguanine (PreQ1) at position 34 (anticodon wobble position) in tRNAs with GU(N) anticodons (tRNA-Asp, -Asn, -His and -Tyr). Catalysis occurs through a double-displacement mechanism. The nucleophile active site attacks the C1' of nucleotide 34 to detach the guanine base from the RNA, forming a covalent enzyme-RNA intermediate. The proton acceptor active site deprotonates the incoming PreQ1, allowing a nucleophilic attack on the C1' of the ribose to form the product. After dissociation, two additional enzymatic reactions on the tRNA convert PreQ1 to queuine (Q), resulting in the hypermodified nucleoside queuosine (7-(((4,5-cis-dihydroxy-2-cyclopenten-1-yl)amino)methyl)-7-deazaguanosine). This is Queuine tRNA-ribosyltransferase from Photorhabdus laumondii subsp. laumondii (strain DSM 15139 / CIP 105565 / TT01) (Photorhabdus luminescens subsp. laumondii).